The primary structure comprises 388 residues: Succinate--CoA ligase [ADP-forming] subunit beta (388 aa).

The ATP-grasp domain maps to 9-244 (KQLFAEYGLP…PSQDDAREAH (236 aa)). ATP-binding positions include K46, 53–55 (GRG), E99, T102, and E107. The Mg(2+) site is built by N199 and D213. Substrate is bound by residues N264 and 321–323 (GIV).

It belongs to the succinate/malate CoA ligase beta subunit family. In terms of assembly, heterotetramer of two alpha and two beta subunits. It depends on Mg(2+) as a cofactor.

It carries out the reaction succinate + ATP + CoA = succinyl-CoA + ADP + phosphate. The catalysed reaction is GTP + succinate + CoA = succinyl-CoA + GDP + phosphate. It participates in carbohydrate metabolism; tricarboxylic acid cycle; succinate from succinyl-CoA (ligase route): step 1/1. Functionally, succinyl-CoA synthetase functions in the citric acid cycle (TCA), coupling the hydrolysis of succinyl-CoA to the synthesis of either ATP or GTP and thus represents the only step of substrate-level phosphorylation in the TCA. The beta subunit provides nucleotide specificity of the enzyme and binds the substrate succinate, while the binding sites for coenzyme A and phosphate are found in the alpha subunit. This chain is Succinate--CoA ligase [ADP-forming] subunit beta, found in Pseudomonas paraeruginosa (strain DSM 24068 / PA7) (Pseudomonas aeruginosa (strain PA7)).